Here is a 418-residue protein sequence, read N- to C-terminus: Neurotensin receptor type 1 (418 aa).

Residues 1 to 67 are Extracellular-facing; the sequence is MRLNSSAPGT…TDIYSKVLVT (67 aa). N-linked (GlcNAc...) asparagine glycans are attached at residues asparagine 4, asparagine 37, and asparagine 41. The helical transmembrane segment at 68–88 threads the bilayer; that stretch reads AVYLALFVVGTVGNTVTAFTL. The Cytoplasmic segment spans residues 89–102; sequence ARKKSLQSLQSTVH. Residues 103-122 traverse the membrane as a helical segment; sequence YHLGSLALSDLLTLLLAMPV. The Extracellular segment spans residues 123 to 142; the sequence is ELYNFIWVHHPWAFGDAGCR. Cysteine 141 and cysteine 224 are oxidised to a cystine. Residues 143–164 traverse the membrane as a helical segment; that stretch reads GYYFLRDACTYATALNVASLSV. Over 165 to 184 the chain is Cytoplasmic; the sequence is ERYLAICHPFKAKTLMSRSR. A helical membrane pass occupies residues 185–205; it reads TKKFISAIWLASALLAVPMLF. Topologically, residues 206–234 are extracellular; that stretch reads TMGEQNRSADGQHAGGLVCTPTIHTATVK. Residues 235 to 259 traverse the membrane as a helical segment; it reads VVIQVNTFMSFIFPMVVISVLNTII. The Cytoplasmic portion of the chain corresponds to 260–303; sequence ANKLTVMVRQAAEQGQVCTVGGEHSTFSMAIEPGRVQALRHGVR. A helical membrane pass occupies residues 304–325; it reads VLRAVVIAFVVCWLPYHVRRLM. The tract at residues 321-344 is neurotensin binding; that stretch reads VRRLMFCYISDEQWTPFLYDFYHY. Topologically, residues 326–343 are extracellular; sequence FCYISDEQWTPFLYDFYH. The helical transmembrane segment at 344–364 threads the bilayer; the sequence is YFYMVTNALFYVSSTINPILY. Over 365-418 the chain is Cytoplasmic; sequence NLVSANFRHIFLATLACLCPVWRRRRKRPAFSRKADSVSSNHTLSSNATRETLY. 2 S-palmitoyl cysteine lipidation sites follow: cysteine 381 and cysteine 383.

Belongs to the G-protein coupled receptor 1 family. Neurotensin receptor subfamily. NTSR1 sub-subfamily. In terms of assembly, interacts (palmitoylated form) with GNA11. N-glycosylated. Post-translationally, palmitoylated; this is required for normal localization at membrane rafts and normal GNA11-mediated activation of down-stream signaling cascades. The palmitoylation level increases in response to neurotensin treatment. As to expression, expressed in prostate (at protein level). Detected in colon and peripheral blood mononuclear cells. Detected at very low levels in brain.

It is found in the cell membrane. The protein resides in the membrane raft. G-protein coupled receptor for the tridecapeptide neurotensin (NTS). Signaling is effected via G proteins that activate a phosphatidylinositol-calcium second messenger system. Signaling leads to the activation of downstream MAP kinases and protects cells against apoptosis. In Homo sapiens (Human), this protein is Neurotensin receptor type 1 (NTSR1).